A 220-amino-acid chain; its full sequence is MNIPLVVRRLGVQDYNQVWRQMQDFTDQRNENTPDEIWLVQHPPVFTQGQAGKPEHLLNPGAIPVVRSDRGGQITYHGPGQQIMYVLIDIKRGKAYGRDISVRQLVSALEQSVVKTLAGYGVNAYPKAEAPGVYVNTDGQEKKICSLGLRIRHGCSFHGLALNINMDLTPFHHINPCGYAGLEMCQLADFVENGEADCDEVSPKLVTHFAEILGYNATKF.

The BPL/LPL catalytic domain occupies 31–217; the sequence is ENTPDEIWLV…HFAEILGYNA (187 aa). Substrate contacts are provided by residues 70–77, 146–148, and 159–161; these read RGGQITYH, SLG, and GLA. Catalysis depends on C177, which acts as the Acyl-thioester intermediate.

The protein belongs to the LipB family.

The protein localises to the cytoplasm. It catalyses the reaction octanoyl-[ACP] + L-lysyl-[protein] = N(6)-octanoyl-L-lysyl-[protein] + holo-[ACP] + H(+). It participates in protein modification; protein lipoylation via endogenous pathway; protein N(6)-(lipoyl)lysine from octanoyl-[acyl-carrier-protein]: step 1/2. Catalyzes the transfer of endogenously produced octanoic acid from octanoyl-acyl-carrier-protein onto the lipoyl domains of lipoate-dependent enzymes. Lipoyl-ACP can also act as a substrate although octanoyl-ACP is likely to be the physiological substrate. The sequence is that of Octanoyltransferase from Actinobacillus succinogenes (strain ATCC 55618 / DSM 22257 / CCUG 43843 / 130Z).